The following is a 134-amino-acid chain: UPF0412 protein YaaI (134 aa).

A signal peptide spans 1–23 (MRSVLTISAGLLFGLALSSVAHA).

It belongs to the UPF0412 family.

This is UPF0412 protein YaaI from Salmonella agona (strain SL483).